Here is a 373-residue protein sequence, read N- to C-terminus: Protein phosphatase 1K, mitochondrial (373 aa).

The PPM-type phosphatase domain maps to 95 to 347; the sequence is KVGCSTQLGK…DNSTAIVVPF (253 aa). Residues D128, G129, and D338 each coordinate Mg(2+).

This sequence belongs to the PP2C family. Mg(2+) serves as cofactor. It depends on Mn(2+) as a cofactor.

Its subcellular location is the mitochondrion matrix. The catalysed reaction is O-phospho-L-seryl-[protein] + H2O = L-seryl-[protein] + phosphate. The enzyme catalyses O-phospho-L-threonyl-[protein] + H2O = L-threonyl-[protein] + phosphate. This chain is Protein phosphatase 1K, mitochondrial (ppm1k), found in Xenopus laevis (African clawed frog).